We begin with the raw amino-acid sequence, 101 residues long: Aspartyl/glutamyl-tRNA(Asn/Gln) amidotransferase subunit C (101 aa).

This sequence belongs to the GatC family. In terms of assembly, heterotrimer of A, B and C subunits.

The catalysed reaction is L-glutamyl-tRNA(Gln) + L-glutamine + ATP + H2O = L-glutaminyl-tRNA(Gln) + L-glutamate + ADP + phosphate + H(+). It catalyses the reaction L-aspartyl-tRNA(Asn) + L-glutamine + ATP + H2O = L-asparaginyl-tRNA(Asn) + L-glutamate + ADP + phosphate + 2 H(+). In terms of biological role, allows the formation of correctly charged Asn-tRNA(Asn) or Gln-tRNA(Gln) through the transamidation of misacylated Asp-tRNA(Asn) or Glu-tRNA(Gln) in organisms which lack either or both of asparaginyl-tRNA or glutaminyl-tRNA synthetases. The reaction takes place in the presence of glutamine and ATP through an activated phospho-Asp-tRNA(Asn) or phospho-Glu-tRNA(Gln). This is Aspartyl/glutamyl-tRNA(Asn/Gln) amidotransferase subunit C from Lactobacillus delbrueckii subsp. bulgaricus (strain ATCC 11842 / DSM 20081 / BCRC 10696 / JCM 1002 / NBRC 13953 / NCIMB 11778 / NCTC 12712 / WDCM 00102 / Lb 14).